The primary structure comprises 604 residues: Serine/threonine-protein phosphatase 2B catalytic subunit A2 (604 aa).

The segment at 21 to 48 (NKTERPQSSTTPIDSKASTVAAANSTAT) is disordered. Threonine 31 is modified (phosphothreonine). The span at 35–48 (SKASTVAAANSTAT) shows a compositional bias: low complexity. The Fe cation site is built by aspartate 144, histidine 146, and aspartate 172. 2 residues coordinate Zn(2+): aspartate 172 and asparagine 204. The Proton donor role is filled by histidine 205. 2 residues coordinate Zn(2+): histidine 253 and histidine 359. The tract at residues 470–497 (KKLPQAGKSEATPQPATSASPKHASILD) is disordered. Over residues 480 to 489 (ATPQPATSAS) the composition is skewed to polar residues. Residues serine 489 and serine 520 each carry the phosphoserine modification. The calmodulin-binding stretch occupies residues 501-523 (RRKALRNKILAVAKVSRMYSVLR).

The protein belongs to the PPP phosphatase family. PP-2B subfamily. In terms of assembly, composed of two components (A and B), the A component is the catalytic subunit and the B component confers calcium sensitivity. It depends on Fe(3+) as a cofactor. Zn(2+) is required as a cofactor.

The catalysed reaction is O-phospho-L-seryl-[protein] + H2O = L-seryl-[protein] + phosphate. The enzyme catalyses O-phospho-L-threonyl-[protein] + H2O = L-threonyl-[protein] + phosphate. Its function is as follows. Calcium-dependent, calmodulin-stimulated protein phosphatase. This subunit may have a role in the calmodulin activation of calcineurin. The sequence is that of Serine/threonine-protein phosphatase 2B catalytic subunit A2 (CMP2) from Saccharomyces cerevisiae (strain ATCC 204508 / S288c) (Baker's yeast).